A 672-amino-acid polypeptide reads, in one-letter code: Acetyl-coenzyme A synthetase (672 aa).

Residues R217–K220 and T335 each bind CoA. ATP contacts are provided by residues G411–P413, D435–T440, D529, R544, and R555. Mg(2+)-binding residues include V566, H568, and I571. Residue R613 participates in CoA binding. K638 bears the N6-acetyllysine mark.

It belongs to the ATP-dependent AMP-binding enzyme family. The cofactor is Mg(2+). Post-translationally, acetylated. Deacetylation by the SIR2-homolog deacetylase activates the enzyme. The N-terminus is blocked.

It catalyses the reaction acetate + ATP + CoA = acetyl-CoA + AMP + diphosphate. Functionally, catalyzes the conversion of acetate into acetyl-CoA (AcCoA), an essential intermediate at the junction of anabolic and catabolic pathways. AcsA undergoes a two-step reaction. In the first half reaction, AcsA combines acetate with ATP to form acetyl-adenylate (AcAMP) intermediate. In the second half reaction, it can then transfer the acetyl group from AcAMP to the sulfhydryl group of CoA, forming the product AcCoA. This chain is Acetyl-coenzyme A synthetase, found in Methanothrix soehngenii (Methanosaeta concilii).